Consider the following 262-residue polypeptide: MASGIRCFRLLHPAFRSYHAALTRPVSEVSMKTVSGRQHGHRQYSAYPAVPVRHFATKKAKAKGKGQPQARVTVNRALVEDIISLEEVDEDMKSVVEALKDNFNKTLNIRTAPGSLDHITVVTADGKVALNQIGQISMKSPQVILVNMASFPECTAAAIKAIRESGMNLNPEVEGTLIRVPIPKVTREHREMLVKLAKQNTNKAKENLRKVRTNAMNKLKKSKDKTSEDTIRLIEKQISQMADDTVAELDQHLAAKTKELLG.

A mitochondrion-targeting transit peptide spans 1–55 (MASGIRCFRLLHPAFRSYHAALTRPVSEVSMKTVSGRQHGHRQYSAYPAVPVRHF).

Belongs to the RRF family.

The protein resides in the mitochondrion. Responsible for the disassembly of ribosomes from messenger RNA at the termination of mitochondrial protein biosynthesis. Acts in collaboration with GFM2. Promotes mitochondrial ribosome recycling by dissolution of intersubunit contacts. This Mus musculus (Mouse) protein is Ribosome-recycling factor, mitochondrial (Mrrf).